Here is a 397-residue protein sequence, read N- to C-terminus: 42.8 kDa protein in whiE locus (397 aa).

The interval 1–22 (MTVSPVVATDAPSTDATRTTAT) is disordered. The span at 8 to 22 (ATDAPSTDATRTTAT) shows a compositional bias: low complexity. Positions 46–137 (VRVVLMLDVH…DTHSLRYSVL (92 aa)) constitute an ABM domain.

The protein belongs to the SchA/CurD family.

This chain is 42.8 kDa protein in whiE locus, found in Streptomyces coelicolor (strain ATCC BAA-471 / A3(2) / M145).